A 99-amino-acid polypeptide reads, in one-letter code: Integration host factor subunit alpha (99 aa).

Belongs to the bacterial histone-like protein family. As to quaternary structure, heterodimer of an alpha and a beta chain.

Its function is as follows. This protein is one of the two subunits of integration host factor, a specific DNA-binding protein that functions in genetic recombination as well as in transcriptional and translational control. This chain is Integration host factor subunit alpha, found in Alteromonas mediterranea (strain DSM 17117 / CIP 110805 / LMG 28347 / Deep ecotype).